The primary structure comprises 274 residues: Rhamnulose-1-phosphate aldolase (274 aa).

Glu117 is an active-site residue. 3 residues coordinate Zn(2+): His141, His143, and His212.

It belongs to the aldolase class II family. RhaD subfamily. Homotetramer. Requires Zn(2+) as cofactor.

It is found in the cytoplasm. The enzyme catalyses L-rhamnulose 1-phosphate = (S)-lactaldehyde + dihydroxyacetone phosphate. It participates in carbohydrate degradation; L-rhamnose degradation; glycerone phosphate from L-rhamnose: step 3/3. In terms of biological role, catalyzes the reversible cleavage of L-rhamnulose-1-phosphate to dihydroxyacetone phosphate (DHAP) and L-lactaldehyde. In Escherichia coli O7:K1 (strain IAI39 / ExPEC), this protein is Rhamnulose-1-phosphate aldolase.